The primary structure comprises 2098 residues: 1-phosphatidylinositol 3-phosphate 5-kinase (2098 aa).

The segment at 1 to 45 (MATDDKTSPTLDSANDLPRSPTSPSHLTHFKPLTPDQDEPPFKSA) is disordered. Ala-2 bears the N-acetylalanine mark. Residues Ser-23 and Ser-48 each carry the phosphoserine; by autocatalysis modification. A disordered region spans residues 57–123 (KERAEGGQGE…EPTFGGHDPR (67 aa)). The segment covering 66–88 (EQQPLSGSWTSPQLPSRTQSVRS) has biased composition (polar residues). Residue Ser-88 is modified to Phosphoserine. An FYVE-type zinc finger spans residues 158–218 (DSQCKECYDC…ACTYCRKIAL (61 aa)). Residues Cys-164, Cys-167, Cys-180, Cys-183, Cys-188, Cys-191, Cys-210, and Cys-213 each coordinate Zn(2+). The tract at residues 292-329 (VQEDAGKSPARNRSASITNLSLDRSGSPMVPSYETSVS) is disordered. A phosphoserine mark is found at Ser-299, Ser-307, and Ser-312. Positions 302–315 (RNRSASITNLSLDR) are enriched in polar residues. Ser-318 carries the phosphoserine; by PKB/AKT1 or PKB/AKT2 modification. Ser-329 carries the post-translational modification Phosphoserine. One can recognise a DEP domain in the interval 365-440 (HSSGMEFQDH…DEYALYRPLQ (76 aa)). Polar residues predominate over residues 442–459 (TEFSETPSPDSDSVNSVE). Positions 442–469 (TEFSETPSPDSDSVNSVEGHSEPSWFKD) are disordered. The segment covering 460–469 (GHSEPSWFKD) has biased composition (basic and acidic residues). Ser-475 carries the phosphoserine modification. The interval 484–505 (GDDNLANSASPSKRTSVSSFQS) is disordered. Residues 488–505 (LANSASPSKRTSVSSFQS) show a composition bias toward polar residues. The tract at residues 616-868 (MMALLQQLLH…MICVAYHSQL (253 aa)) is chaperonin-like domain. Disordered stretches follow at residues 1161 to 1191 (RIQPKNSDPFAHSKDASSTSSGQSGSKNEGD) and 1512 to 1616 (FQQE…STDS). Positions 1177 to 1186 (SSTSSGQSGS) are enriched in low complexity. Ser-1522 is subject to Phosphoserine; by autocatalysis. Residues Ser-1544 and Ser-1549 each carry the phosphoserine modification. Residues 1562 to 1578 (LTTLSSQSSTSSTHLQL) are compositionally biased toward low complexity. Phosphoserine; by autocatalysis is present on Ser-1669. The interval 1692–1799 (QWNSAEEGLP…PQDEVDGGDT (108 aa)) is disordered. Over residues 1704 to 1714 (STSDSRPKSSS) the composition is skewed to low complexity. Over residues 1723–1735 (GGQTNRTTETEPQ) the composition is skewed to polar residues. Ser-1754 carries the post-translational modification Phosphoserine. The PIPK domain occupies 1758–2084 (SSQKRETLRG…RFCEAMDKYF (327 aa)). Positions 1842–2098 (EEDFIRSLSH…DHWTGLGLNC (257 aa)) are catalytic. Ser-1969 and Ser-2053 each carry phosphoserine; by autocatalysis.

In terms of assembly, component of the PI(3,5)P2 regulatory complex/PAS complex, at least composed of PIKFYVE, FIG4 and VAC14. VAC14 nucleates the assembly of the complex and serves as a scaffold by pentamerizing into a star-shaped structure, which can bind a single copy each of PIKFYVE and FIG4 and coordinates their activities. Interacts (via chaperonin-like domain) with RABEPK; the interaction recruits RABEPK to the endosomal membrane. Interacts with SPAG9. Interacts with EGFR. In terms of processing, autophosphorylates which inhibits its own phosphatidylinositol 3-phosphate 5-kinase activity, stimulates FIG4 lipid phosphatase activity and down-regulates lipid product formation. Dephosphorylated by FIG4 in the PI(3,5)P2 regulatory complex, at Ser-48, Ser-1669 and Ser-2053. Phosphorylated in response to insulin at Ser-318 in a protein kinase B (PKB)-dependent manner.

The protein resides in the endosome membrane. It is found in the early endosome membrane. Its subcellular location is the cytoplasmic vesicle. It localises to the phagosome membrane. The protein localises to the late endosome membrane. It carries out the reaction a 1,2-diacyl-sn-glycero-3-phospho-(1D-myo-inositol-3-phosphate) + ATP = a 1,2-diacyl-sn-glycero-3-phospho-(1D-myo-inositol-3,5-bisphosphate) + ADP + H(+). The catalysed reaction is a 1,2-diacyl-sn-glycero-3-phospho-(1D-myo-inositol) + ATP = a 1,2-diacyl-sn-glycero-3-phospho-(1D-myo-inositol-5-phosphate) + ADP + H(+). It catalyses the reaction L-seryl-[protein] + ATP = O-phospho-L-seryl-[protein] + ADP + H(+). Inhibited by apilimod and YM201636. Dual specificity kinase implicated in myriad essential cellular processes such as maintenance of endomembrane homeostasis, and endocytic-vacuolar pathway, lysosomal trafficking, nuclear transport, stress- or hormone-induced signaling and cell cycle progression. The PI(3,5)P2 regulatory complex regulates both the synthesis and turnover of phosphatidylinositol 3,5-bisphosphate (PtdIns(3,5)P2). Sole enzyme to catalyze the phosphorylation of phosphatidylinositol 3-phosphate on the fifth hydroxyl of the myo-inositol ring, to form (PtdIns(3,5)P2). Also catalyzes the phosphorylation of phosphatidylinositol on the fifth hydroxyl of the myo-inositol ring, to form phosphatidylinositol 5-phosphate (PtdIns(5)P). Has serine-protein kinase activity and is able to autophosphorylate and transphosphorylate. Autophosphorylation inhibits its own phosphatidylinositol 3-phosphate 5-kinase activity, stimulates FIG4 lipid phosphatase activity and down-regulates lipid product formation. Involved in key endosome operations such as fission and fusion in the course of endosomal cargo transport. Required for the maturation of early into late endosomes, phagosomes and lysosomes. Regulates vacuole maturation and nutrient recovery following engulfment of macromolecules, initiates the redistribution of accumulated lysosomal contents back into the endosome network. Critical regulator of the morphology, degradative activity, and protein turnover of the endolysosomal system in macrophages and platelets. In neutrophils, critical to perform chemotaxis, generate ROS, and undertake phagosome fusion with lysosomes. Plays a key role in the processing and presentation of antigens by major histocompatibility complex class II (MHC class II) mediated by CTSS. Regulates melanosome biogenesis by controlling the delivery of proteins from the endosomal compartment to the melanosome. Essential for systemic glucose homeostasis, mediates insulin-induced signals for endosome/actin remodeling in the course of GLUT4 translocation/glucose uptake activation. Supports microtubule-based endosome-to-trans-Golgi network cargo transport, through association with SPAG9 and RABEPK. Mediates EGFR trafficking to the nucleus. Its function is as follows. (Microbial infection) Required for cell entry of coronaviruses SARS-CoV and SARS-CoV-2, as well as human coronavirus EMC (HCoV-EMC) by endocytosis. This Homo sapiens (Human) protein is 1-phosphatidylinositol 3-phosphate 5-kinase.